The following is a 142-amino-acid chain: Small ribosomal subunit protein uS9 (142 aa).

This sequence belongs to the universal ribosomal protein uS9 family. Component of the small ribosomal subunit. Mature ribosomes consist of a small (40S) and a large (60S) subunit. The 40S subunit contains about 32 different proteins and 1 molecule of RNA (18S). The 60S subunit contains 45 different proteins and 3 molecules of RNA (25S, 5.8S and 5S).

It is found in the cytoplasm. In terms of biological role, component of the ribosome, a large ribonucleoprotein complex responsible for the synthesis of proteins in the cell. The small ribosomal subunit (SSU) binds messenger RNAs (mRNAs) and translates the encoded message by selecting cognate aminoacyl-transfer RNA (tRNA) molecules. The large subunit (LSU) contains the ribosomal catalytic site termed the peptidyl transferase center (PTC), which catalyzes the formation of peptide bonds, thereby polymerizing the amino acids delivered by tRNAs into a polypeptide chain. The nascent polypeptides leave the ribosome through a tunnel in the LSU and interact with protein factors that function in enzymatic processing, targeting, and the membrane insertion of nascent chains at the exit of the ribosomal tunnel. The sequence is that of Small ribosomal subunit protein uS9 (RPS16A) from Candida albicans (strain SC5314 / ATCC MYA-2876) (Yeast).